Reading from the N-terminus, the 568-residue chain is MSGGGSSSGPRSKDRNLNGRSAQYDEVPADPRHPETNLETLHDRDLALSADPLPPPPLPLHPPFGAEFYPSDSEEPVTTLELRPVRRFIPDSWKNIFKGKKENPWENPMTEINYTSGGVPCSPPRSPSLPASEPHGKNLAGDSKTVASSYRDPYGGSGGSYNSRREEEAMLPHDPYGSLGRQTQTVKTYSERVEEYNMRYAYMKSWAGLLRILCIVELLLGAAVFACVTAYIHKDNEWYNMFGYSQPYGYTASMQGGYYYSGPKTPFVLVVAGLAWIVTIILLVLGMSMYYRTILLDSTWWPLTEFGINISLFILYMAGAIVYVNDTNRGGLCYYQLFNTPVNASFCRVEGGQTAAIIFLFVSMLMYFISAMVSLKLWRHESARKRREFLGQEMNPNQISPPKVMREVALGNGHMIDVPDQQRDMRKVEMKPELLSGYIPAGHIPKPIVMPDYVAKYQAIKAEDERERYKAVFNDQFAEYKELHAEVQAVMKKFSELDAVMQKLPRNPENQHEYERIAKVLQEYQKKKNEPTFLEKKERCEYLKNKLSHIKQRIQEYDKVMDWNDGYN.

Disordered regions lie at residues methionine 1–aspartate 72 and serine 116–serine 163. Residues methionine 1–arginine 211 lie on the Cytoplasmic side of the membrane. The segment covering alanine 29–leucine 46 has biased composition (basic and acidic residues). The segment covering proline 52–proline 62 has biased composition (pro residues). Positions serine 205–arginine 379 constitute an MARVEL domain. Residues isoleucine 212–isoleucine 232 form a helical membrane-spanning segment. Topologically, residues histidine 233–proline 266 are extracellular. The chain crosses the membrane as a helical span at residues phenylalanine 267–methionine 287. The Cytoplasmic portion of the chain corresponds to serine 288–leucine 303. A helical membrane pass occupies residues threonine 304–valine 324. Residues asparagine 325–threonine 354 lie on the Extracellular side of the membrane. Residues alanine 355 to leucine 375 traverse the membrane as a helical segment. At lysine 376–asparagine 568 the chain is on the cytoplasmic side. One can recognise an OCEL domain in the interval proline 451–aspartate 562. Positions alanine 462–lysine 559 form a coiled coil.

Belongs to the ELL/occludin family.

The protein localises to the cell membrane. Its subcellular location is the cell junction. It localises to the tight junction. Functionally, may play a role in the formation of the epithelial barrier. The protein is MARVEL domain-containing protein 2 (marveld2) of Xenopus tropicalis (Western clawed frog).